The primary structure comprises 257 residues: 4-hydroxy-tetrahydrodipicolinate reductase (257 aa).

Position 7–12 (7–12 (GCLGRM)) interacts with NAD(+). Arg-34 contributes to the NADP(+) binding site. NAD(+) contacts are provided by residues 96–98 (GTT) and 117–120 (SCNM). His-149 serves as the catalytic Proton donor/acceptor. His-150 lines the (S)-2,3,4,5-tetrahydrodipicolinate pocket. Catalysis depends on Lys-153, which acts as the Proton donor. 159-160 (GT) contacts (S)-2,3,4,5-tetrahydrodipicolinate.

The protein belongs to the DapB family.

It localises to the cytoplasm. It carries out the reaction (S)-2,3,4,5-tetrahydrodipicolinate + NAD(+) + H2O = (2S,4S)-4-hydroxy-2,3,4,5-tetrahydrodipicolinate + NADH + H(+). The catalysed reaction is (S)-2,3,4,5-tetrahydrodipicolinate + NADP(+) + H2O = (2S,4S)-4-hydroxy-2,3,4,5-tetrahydrodipicolinate + NADPH + H(+). It functions in the pathway amino-acid biosynthesis; L-lysine biosynthesis via DAP pathway; (S)-tetrahydrodipicolinate from L-aspartate: step 4/4. Catalyzes the conversion of 4-hydroxy-tetrahydrodipicolinate (HTPA) to tetrahydrodipicolinate. The protein is 4-hydroxy-tetrahydrodipicolinate reductase of Anaplasma marginale (strain St. Maries).